Here is a 118-residue protein sequence, read N- to C-terminus: Protein BEX4 (118 aa).

The interval 14-50 (VEKDKKDKKGGKASKQSEEEPHHLEEVENKKPGGNVR) is disordered. Positions 28 to 44 (KQSEEEPHHLEEVENKK) are enriched in basic and acidic residues. Residues 30-88 (SEEEPHHLEEVENKKPGGNVRRKVRRLVPNFLWAIPNRHVDRNEGGEDVGRFVVQGTEV) form an interaction with SIRT2 region. Residues 30-118 (SEEEPHHLEE…DNHYDFCLIP (89 aa)) are interaction with alpha-tubulin. Residue Cys-115 coordinates Zn(2+).

Belongs to the BEX family. Interacts with alpha-tubulin. Interacts with SIRT2. Ubiquitinated and degraded by the proteasome. Expressed in both Sertoli and germ cells as well as interstitial area of the testis (at protein level).

It localises to the cytoplasm. It is found in the cytoskeleton. The protein resides in the spindle pole. The protein localises to the nucleus. Its function is as follows. May play a role in microtubule deacetylation by negatively regulating the SIRT2 deacetylase activity toward alpha-tubulin and thereby participate in the control of cell cycle progression and genomic stability. In absence of reductive stress, acts as a pseudosubstrate for the CRL2(FEM1B) complex: associates with FEM1B via zinc, thereby preventing association between FEM1B and its substrates. This Mus musculus (Mouse) protein is Protein BEX4.